We begin with the raw amino-acid sequence, 176 residues long: Inner membrane-spanning protein YciB (176 aa).

5 helical membrane passes run 3–23 (FLFD…WGIF), 49–69 (TMLW…LVLH), 72–92 (KFIQ…LVAA), 118–138 (KLNL…LYVV), and 149–169 (FKLF…SLWL).

It belongs to the YciB family.

It is found in the cell inner membrane. Plays a role in cell envelope biogenesis, maintenance of cell envelope integrity and membrane homeostasis. This Burkholderia thailandensis (strain ATCC 700388 / DSM 13276 / CCUG 48851 / CIP 106301 / E264) protein is Inner membrane-spanning protein YciB.